The primary structure comprises 256 residues: Imidazole glycerol phosphate synthase subunit HisF (256 aa).

Catalysis depends on residues D11 and D130.

Belongs to the HisA/HisF family. Heterodimer of HisH and HisF.

The protein localises to the cytoplasm. It carries out the reaction 5-[(5-phospho-1-deoxy-D-ribulos-1-ylimino)methylamino]-1-(5-phospho-beta-D-ribosyl)imidazole-4-carboxamide + L-glutamine = D-erythro-1-(imidazol-4-yl)glycerol 3-phosphate + 5-amino-1-(5-phospho-beta-D-ribosyl)imidazole-4-carboxamide + L-glutamate + H(+). The protein operates within amino-acid biosynthesis; L-histidine biosynthesis; L-histidine from 5-phospho-alpha-D-ribose 1-diphosphate: step 5/9. IGPS catalyzes the conversion of PRFAR and glutamine to IGP, AICAR and glutamate. The HisF subunit catalyzes the cyclization activity that produces IGP and AICAR from PRFAR using the ammonia provided by the HisH subunit. This is Imidazole glycerol phosphate synthase subunit HisF from Methylocella silvestris (strain DSM 15510 / CIP 108128 / LMG 27833 / NCIMB 13906 / BL2).